A 405-amino-acid polypeptide reads, in one-letter code: L-rhamnonate dehydratase (405 aa).

Residues H33 and R59 each coordinate substrate. Mg(2+) contacts are provided by D226, E252, and E280. H329 (proton acceptor) is an active-site residue. Residue E349 participates in substrate binding.

This sequence belongs to the mandelate racemase/muconate lactonizing enzyme family. RhamD subfamily. In terms of assembly, homooctamer; tetramer of dimers. The cofactor is Mg(2+).

It catalyses the reaction L-rhamnonate = 2-dehydro-3-deoxy-L-rhamnonate + H2O. Catalyzes the dehydration of L-rhamnonate to 2-keto-3-deoxy-L-rhamnonate (KDR). Can also dehydrate L-lyxonate and L-mannonate, although less efficiently, but not 2-keto-4-hydroxyheptane-1,7-dioate. The polypeptide is L-rhamnonate dehydratase (rhmD) (Salmonella typhimurium (strain LT2 / SGSC1412 / ATCC 700720)).